A 400-amino-acid chain; its full sequence is Serpin E3 (400 aa).

The first 19 residues, 1 to 19, serve as a signal peptide directing secretion; that stretch reads MQSLLLALLLLPVCSPGGA. The N-linked (GlcNAc...) asparagine glycan is linked to Asn46.

It belongs to the serpin family.

Its subcellular location is the secreted. Probable serine protease inhibitor. The chain is Serpin E3 (SERPINE3) from Bos taurus (Bovine).